We begin with the raw amino-acid sequence, 64 residues long: MADVRPENNESFESMLKRFNRKVQQDGILSEARRRTRFERPPTRRKRKDAAKRRLAIKAARKAT.

The disordered stretch occupies residues 26–64 (DGILSEARRRTRFERPPTRRKRKDAAKRRLAIKAARKAT). Basic residues predominate over residues 43 to 64 (TRRKRKDAAKRRLAIKAARKAT).

It belongs to the bacterial ribosomal protein bS21 family.

In Dehalococcoides mccartyi (strain ATCC BAA-2100 / JCM 16839 / KCTC 5957 / BAV1), this protein is Small ribosomal subunit protein bS21.